The sequence spans 272 residues: Glycosylphosphatidylinositol anchor biosynthesis protein 11 (272 aa).

Over residues 21 to 31 (QSTSTTKSTPG) the composition is skewed to polar residues. Residues 21–48 (QSTSTTKSTPGSQATESSTTTAGSSSSL) form a disordered region. Over residues 32–48 (SQATESSTTTAGSSSSL) the composition is skewed to low complexity. 5 helical membrane passes run 91 to 111 (VMLN…LLCL), 145 to 165 (LLAS…MVLF), 177 to 197 (FLCA…VHGV), 215 to 235 (TFGG…PIPL), and 248 to 268 (ILCG…TLFW).

The protein belongs to the PIGF family.

The protein resides in the endoplasmic reticulum membrane. It functions in the pathway glycolipid biosynthesis; glycosylphosphatidylinositol-anchor biosynthesis. In terms of biological role, acts in the GPI biosynthetic pathway between GlcNAc-PI synthesis and GPI transfer to protein. The sequence is that of Glycosylphosphatidylinositol anchor biosynthesis protein 11 (gpi-11) from Neurospora crassa (strain ATCC 24698 / 74-OR23-1A / CBS 708.71 / DSM 1257 / FGSC 987).